The primary structure comprises 294 residues: MRTLPLNGSRNSSRLPTLLLAAGLAMTPWAPALAAGMEGMDHGSHSMPMGASSDAPAQSRTPIPPVTDADRAAVYTSHSGHQVHDSAINSYFVADKLEWQDANDGSALAWDLSGWIGGDIDRLLLRSEGERTNGKTEEAEVQALWGHAVSSSWDVVAGARQDFKPGAPQTWAAFGLQGQAISDLDVEATAFIGDAGQTAARLEADYDLLLTNDLILQPTGELNFYGKNDPQRGNGSGLSTSEFGLRLRYEITPQFAPYVGVTWNRSYGKTADYAREDDEDVAQARLVVGLRLWF.

Residues 1–34 (MRTLPLNGSRNSSRLPTLLLAAGLAMTPWAPALA) form the signal peptide. The segment at 40-60 (MDHGSHSMPMGASSDAPAQSR) is disordered.

It localises to the cell outer membrane. Its function is as follows. Exact function not known. Could be involved in copper resistance. The chain is Copper resistance protein B homolog (copB) from Pseudomonas syringae pv. tomato (strain ATCC BAA-871 / DC3000).